Reading from the N-terminus, the 699-residue chain is 1,4-alpha-glucan-branching enzyme (699 aa).

Substrate contacts are provided by residues 59–60 (NE) and 88–90 (WAP). Trp104 provides a ligand contact to (1,4-alpha-D-glucosyl)n. 115-118 (DYGK) lines the substrate pocket. Residue Lys140 participates in (1,4-alpha-D-glucosyl)n binding. Tyr170 carries the post-translational modification Phosphotyrosine. Substrate is bound at residue 330-333 (EVLR). Asp354 (nucleophile) is an active-site residue. The Proton donor role is filled by Glu409.

This sequence belongs to the glycosyl hydrolase 13 family. GlgB subfamily. Monomer.

It carries out the reaction Transfers a segment of a (1-&gt;4)-alpha-D-glucan chain to a primary hydroxy group in a similar glucan chain.. The protein operates within glycan biosynthesis; glycogen biosynthesis. Glycogen-branching enzyme participates in the glycogen biosynthetic process along with glycogenin and glycogen synthase. Generates alpha-1,6-glucosidic branches from alpha-1,4-linked glucose chains, to increase solubility of the glycogen polymer. In Felis catus (Cat), this protein is 1,4-alpha-glucan-branching enzyme (GBE1).